The primary structure comprises 278 residues: Delta(3,5)-Delta(2,4)-dienoyl-CoA isomerase, peroxisomal (278 aa).

Position 1 is an N-acetylmethionine (Met-1). Residues 69–73 and Gly-128 contribute to the substrate site; that span reads SGIDL. Residues 276 to 278 carry the Microbody targeting signal motif; it reads AKL.

This sequence belongs to the enoyl-CoA hydratase/isomerase family. In terms of tissue distribution, expressed in roots, leaves, stems and flowers.

The protein localises to the peroxisome. The catalysed reaction is a (3E,5Z)-dienoyl-CoA = a (2E,4E)-(5,6-saturated)-dienoyl-CoA. It functions in the pathway lipid metabolism; fatty acid beta-oxidation. In terms of biological role, converts 3,5-dienoyl-CoAs to the corresponding 2,4-dienoyl-CoAs. Involved in degradation of unsaturated fatty acids. The chain is Delta(3,5)-Delta(2,4)-dienoyl-CoA isomerase, peroxisomal from Arabidopsis thaliana (Mouse-ear cress).